Reading from the N-terminus, the 539-residue chain is MHGFRALKSEVIMSNMTNAAPHTPIQEADYSAIHPPSLLKRLELTNPVFWLSGSFLSLFVLLALTNTESLTAMVNAGFGFATKYFGAYWQVLLLLNFLIGLALAFGRTGYVRLGGLAKPDIDTFKWLSIVLCTLLAGGGVFWAAAEPIAHFVTAPPLYGEASPKTSAINALSQSFMHWGFLAWAILGCLSSIVLMHLHYDKGLPLKPRTLLYPIFGDKAIHGWIGNLADACSIIAVAAGTIGPIGFLGLQISYALNSLFGFPDNFITQSMVIVAAIVMYTLSALSGVSKGIQLVSRYNIILSVLLIGYILFFGPTSFIIDGYVQGVGRMVDNFFPMALYRDDTGWLSWWTVFFWGWFIGYGPMMAIFIARISRGRTIRQLILSISIAAPLITCFWFSIVGGSGLAFELANPGLISSAFEGFNLPAVLLAITGELPFPMIISVLFLILTTTFIVTTGDSMTYTISVVMTGSAEPNAVIRSFWGLMMGVVAIALISMGSGGITALQSFIVITAVPVSFILLPSILKAPGIANQMAKDQGLV.

12 consecutive transmembrane segments (helical) span residues 44-64 (LTNP…LLAL), 85-105 (FGAY…ALAF), 129-149 (IVLC…EPIA), 175-195 (FMHW…IVLM), 231-251 (CSII…GLQI), 265-285 (FITQ…SALS), 299-319 (IILS…SFII), 348-368 (WWTV…AIFI), 380-400 (LILS…SIVG), 426-446 (VLLA…LFLI), 480-500 (FWGL…SGGI), and 503-523 (LQSF…PSIL).

Belongs to the BCCT transporter (TC 2.A.15) family.

It localises to the cell inner membrane. In terms of biological role, involved in the uptake of the osmoprotectant glycine betaine. The protein is Glycine betaine transporter 2 of Vibrio parahaemolyticus serotype O3:K6 (strain RIMD 2210633).